Reading from the N-terminus, the 310-residue chain is Cytosolic Fe-S cluster assembly factor Nubp1 homolog (310 aa).

Positions 8, 22, 25, and 31 each coordinate [4Fe-4S] cluster. 62-69 lines the ATP pocket; the sequence is GKGGVGKS. Residues Cys-239 and Cys-242 each coordinate [4Fe-4S] cluster.

The protein belongs to the Mrp/NBP35 ATP-binding proteins family. NUBP1/NBP35 subfamily. As to quaternary structure, heterotetramer of 2 Nubp1 and 2 Nubp2 chains. It depends on [4Fe-4S] cluster as a cofactor.

The protein resides in the cytoplasm. In terms of biological role, component of the cytosolic iron-sulfur (Fe/S) protein assembly (CIA) machinery. Required for maturation of extramitochondrial Fe-S proteins. The Nubp1-Nubp2 heterotetramer forms a Fe-S scaffold complex, mediating the de novo assembly of an Fe-S cluster and its transfer to target apoproteins. In Drosophila willistoni (Fruit fly), this protein is Cytosolic Fe-S cluster assembly factor Nubp1 homolog.